The primary structure comprises 550 residues: Hydroxylamine reductase (550 aa).

[2Fe-2S] cluster is bound by residues cysteine 3, cysteine 6, cysteine 18, and cysteine 25. Histidine 249, glutamate 273, cysteine 317, cysteine 405, cysteine 433, cysteine 458, glutamate 492, and lysine 494 together coordinate hybrid [4Fe-2O-2S] cluster. Cysteine 405 bears the Cysteine persulfide mark.

This sequence belongs to the HCP family. It depends on [2Fe-2S] cluster as a cofactor. Hybrid [4Fe-2O-2S] cluster is required as a cofactor.

Its subcellular location is the cytoplasm. It catalyses the reaction A + NH4(+) + H2O = hydroxylamine + AH2 + H(+). Its function is as follows. Catalyzes the reduction of hydroxylamine to form NH(3) and H(2)O. In Yersinia pseudotuberculosis serotype IB (strain PB1/+), this protein is Hydroxylamine reductase.